The primary structure comprises 272 residues: HMP-PP phosphatase (272 aa).

The active-site Nucleophile is Asp8. Asp8, Asp10, and Asp212 together coordinate Mg(2+).

This sequence belongs to the HAD-like hydrolase superfamily. Cof family. It depends on Mg(2+) as a cofactor.

It catalyses the reaction 4-amino-2-methyl-5-(diphosphooxymethyl)pyrimidine + H2O = 4-amino-2-methyl-5-(phosphooxymethyl)pyrimidine + phosphate + H(+). Its function is as follows. Catalyzes the hydrolysis of 4-amino-2-methyl-5-hydroxymethylpyrimidine pyrophosphate (HMP-PP) to 4-amino-2-methyl-5-hydroxymethylpyrimidine phosphate (HMP-P). This chain is HMP-PP phosphatase, found in Salmonella schwarzengrund (strain CVM19633).